Here is a 358-residue protein sequence, read N- to C-terminus: Chorismate synthase (358 aa).

Residue R46 coordinates NADP(+). FMN-binding positions include 123-125 (RSS), 235-236 (NA), G275, 290-294 (KPTPS), and R316.

The protein belongs to the chorismate synthase family. As to quaternary structure, homotetramer. FMNH2 serves as cofactor.

The catalysed reaction is 5-O-(1-carboxyvinyl)-3-phosphoshikimate = chorismate + phosphate. Its pathway is metabolic intermediate biosynthesis; chorismate biosynthesis; chorismate from D-erythrose 4-phosphate and phosphoenolpyruvate: step 7/7. Functionally, catalyzes the anti-1,4-elimination of the C-3 phosphate and the C-6 proR hydrogen from 5-enolpyruvylshikimate-3-phosphate (EPSP) to yield chorismate, which is the branch point compound that serves as the starting substrate for the three terminal pathways of aromatic amino acid biosynthesis. This reaction introduces a second double bond into the aromatic ring system. The polypeptide is Chorismate synthase (Helicobacter hepaticus (strain ATCC 51449 / 3B1)).